The sequence spans 461 residues: MPPSKARRKRSLRDITATVATGTVANSKPGSSSTNEGKQQDKKKEGPQEPDIPPLPPVVVNIVPRQGLGCEVVEGLLVPSRKREYKPNSKYTVGNHPIYAIGFNFIDMRYYDVFAIASCNSVIIYRCLENGGFGLLQNYVDEDKDESFYTLSWTIDQVDSSPLLVAAGSNRIIRVINCATEKLDKSLVGHGGSIHEIRTHASKPSLIISASKDESIRLWNVHTGICILVFAGAGGHRHDVLSVDFHPTEVGIFASCGMDNTVKIWSMKEFWIYVEKSYSWTGHPSKFPTRNIQFPVLTAAVHSDYVDCTRWLGDFILSKSVKNAVLLWEPKPDKRRPGEGSVDVLQKYPVPKCSLWFMKFSCDFYSNQMAIGNNKGEIYVWEVQSSPPVLIDRLCNQECKSPIRQTAVSFDGSTILGAADDGAIWRWDEVDPAASSSKPDQAAAPAAGVGAGAGADADADA.

Positions 1 to 11 (MPPSKARRKRS) are enriched in basic residues. The tract at residues 1 to 56 (MPPSKARRKRSLRDITATVATGTVANSKPGSSSTNEGKQQDKKKEGPQEPDIPPLP) is disordered. The span at 18–37 (TVATGTVANSKPGSSSTNEG) shows a compositional bias: polar residues. Residues 38–47 (KQQDKKKEGP) show a composition bias toward basic and acidic residues. WD repeat units follow at residues 143-186 (DKDE…LDKS), 189-229 (GHGG…CILV), 235-275 (GHRH…IYVE), 301-338 (VHSD…RRPG), 351-391 (PKCS…PVLI), and 398-437 (ECKS…ASSS). The interval 429–461 (EVDPAASSSKPDQAAAPAAGVGAGAGADADADA) is disordered. Residues 432–448 (PAASSSKPDQAAAPAAG) are compositionally biased toward low complexity.

Belongs to the WD repeat ESC family. In terms of tissue distribution, specifically expressed in kernel starting from 6 days after pollination.

It localises to the nucleus. Its function is as follows. Polycomb group (PcG) protein. PcG proteins act by forming multiprotein complexes, which are required to maintain the transcriptionally repressive state of homeotic genes throughout development. PcG proteins are not required to initiate repression, but to maintain it during later stages of development. They probably act via the methylation of histones, rendering chromatin heritably changed in its expressibility. This chain is Polycomb group protein FIE1 (FIE1), found in Zea mays (Maize).